The following is a 387-amino-acid chain: Small ribosomal subunit protein mS31 (387 aa).

A mitochondrion-targeting transit peptide spans 1–56; it reads MLHRIPAFIRPRPFSGLPLSCGNREVSVAASVLPAAGSGAVRTENTIQRHFCTSRS. Disordered stretches follow at residues 59–83 and 203–228; these read SKKD…GEGK and KSPS…SSLS. Composition is skewed to polar residues over residues 66 to 76 and 207 to 217; these read VPANETSQKAA and MRVSSRPQHQI.

Belongs to the mitochondrion-specific ribosomal protein mS31 family. In terms of assembly, component of the mitochondrial ribosome small subunit (28S) which comprises a 12S rRNA and about 30 distinct proteins.

It is found in the mitochondrion. The polypeptide is Small ribosomal subunit protein mS31 (Mrps31) (Rattus norvegicus (Rat)).